We begin with the raw amino-acid sequence, 610 residues long: MLRSLLLRRSVGHSLGTLSPSSSTIRSSFSPHRTLCTTGQTLTPPPPPPPRPPPPPPATASEAQFRKYAGYAALAIFSGVATYFSFPFPENAKHKKAQIFRYAPLPEDLHTVSNWSGTHEVQTRNFNQPENLADLEALVKESHEKKLRIRPVGSGLSPNGIGLSRSGMVNLALMDKVLEVDKEKKRVTVQAGIRVQQLVDAIKDYGLTLQNFASIREQQIGGIIQVGAHGTGARLPPIDEQVISMKLVTPAKGTIELSREKDPELFHLARCGLGGLGVVAEVTLQCVARHELVEHTYVSNLQEIKKNHKKLLSANKHVKYLYIPYTDTVVVVTCNPVSKWSGPPKDKPKYTTDEAVQHVRDLYRESIVKYRVQDSGKKSPDSSEPDIQELSFTELRDKLLALDPLNDVHVAKVNQAEAEFWKKSEGYRVGWSDEILGFDCGGQQWVSESCFPAGTLANPSMKDLEYIEELKKLIEKEAIPAPAPIEQRWTARSKSPISPAFSTSEDDIFSWVGIIMYLPTADPRQRKDITDEFFHYRHLTQKQLWDQFSAYEHWAKIEIPKDKEELEALQARIRKRFPVDAYNKARRELDPNRILSNNMVEKLFPVSTTA.

A mitochondrion-targeting transit peptide spans 1–35; it reads MLRSLLLRRSVGHSLGTLSPSSSTIRSSFSPHRTL. Residues 17–61 are disordered; it reads TLSPSSSTIRSSFSPHRTLCTTGQTLTPPPPPPPRPPPPPPATAS. Residues 19 to 30 show a composition bias toward low complexity; that stretch reads SPSSSTIRSSFS. A propeptide spans 36–101 (removed in mature form); it reads CTTGQTLTPP…AKHKKAQIFR (66 aa). The segment covering 43–58 has biased composition (pro residues); that stretch reads TPPPPPPPRPPPPPPA. The chain crosses the membrane as a helical span at residues 68–84; it reads YAGYAALAIFSGVATYF. The FAD-binding PCMH-type domain occupies 123–258; that stretch reads TRNFNQPENL…TPAKGTIELS (136 aa).

The cofactor is FAD.

The protein resides in the mitochondrion membrane. The enzyme catalyses L-galactono-1,4-lactone + 4 Fe(III)-[cytochrome c] = L-dehydroascorbate + 4 Fe(II)-[cytochrome c] + 5 H(+). The catalysed reaction is L-gulono-1,4-lactone + 2 Fe(III)-[cytochrome c] = L-ascorbate + 2 Fe(II)-[cytochrome c] + 3 H(+). The protein operates within cofactor biosynthesis; L-ascorbate biosynthesis. Its function is as follows. Involved in the biosynthesis of ascorbate. Catalyzes the final step of ascorbate biosynthesis. Uses L-galactono-1,4-lactone and L-gulono-1,4-lactone as substrates, but not D-galactono-1,4-lactone, D-gulono-1,4-lactone, L-mannono-1,4-lactone or D-galactonic acid. Also active with phenazine methosulfate and 1,4-benzoquinone as electron acceptors. Involved in the regulation of the accumulation of the mitochondrial respiratory complex I. Structural part of one of the plant-specific mitochondrial complex I assembly intermediates, lacking the whole distal (PD) module. Prevents the binding of the plant specific P1 protein (CPN60/HSP60), responsible for the linkage of the proximal (PP) to the distal (PD) module. This chain is L-galactono-1,4-lactone dehydrogenase, mitochondrial, found in Arabidopsis thaliana (Mouse-ear cress).